The following is a 346-amino-acid chain: MSDRQAALDMALKQIEKQFGKGSIMKLGEQTDTRISTVPSGSLALDTALGIGGYPRGRIIEVYGPESSGKTTVALHAIAEVQQQGGQAAFIDAEHALDPVYAQKLGVNIDELLLSQPDTGEQALEIAEALVRSGAVDIVVIDSVAALVPKAEIEGDMGDSHVGLQARLMSQALRKLSGAINKSKTIAIFINQIREKVGVMFGNPETTPGGRALKFYSSVRLEVRRAEQLKQGNDIMGNKTRIKVVKNKVAPPFRIAEVDIMYGEGISKEGEIIDLGSELDIVQKSGAWYSYQEERLGQGRENAKQFLKENKDILLMIQEQIREHYGLDTNGVKAPEDEEGQEELEF.

64 to 71 (GPESSGKT) lines the ATP pocket.

This sequence belongs to the RecA family.

It is found in the cytoplasm. Functionally, can catalyze the hydrolysis of ATP in the presence of single-stranded DNA, the ATP-dependent uptake of single-stranded DNA by duplex DNA, and the ATP-dependent hybridization of homologous single-stranded DNAs. It interacts with LexA causing its activation and leading to its autocatalytic cleavage. This chain is Protein RecA, found in Bacillus pumilus (strain SAFR-032).